The sequence spans 263 residues: uncharacterized protein (263 aa).

In terms of domain architecture, GST N-terminal spans 44–131 (QVYSLGTPNG…YLADKFNHLI (88 aa)). The GST C-terminal domain maps to 134 to 263 (DWAQRTEVLN…ALEVDYKAIK (130 aa)).

The protein belongs to the GST superfamily. Homodimer.

This is an uncharacterized protein from Streptococcus mutans serotype c (strain ATCC 700610 / UA159).